Reading from the N-terminus, the 339-residue chain is tRNA pseudouridine synthase D (339 aa).

Asp-80 (nucleophile) is an active-site residue. Residues 155 to 311 (GFPNYFTEQR…AKGFSWAFEL (157 aa)) form the TRUD domain.

This sequence belongs to the pseudouridine synthase TruD family.

The enzyme catalyses uridine(13) in tRNA = pseudouridine(13) in tRNA. Functionally, responsible for synthesis of pseudouridine from uracil-13 in transfer RNAs. The chain is tRNA pseudouridine synthase D from Haemophilus influenzae (strain PittEE).